The following is a 108-amino-acid chain: UPF0102 protein Tpet_0671 (108 aa).

The protein belongs to the UPF0102 family.

The sequence is that of UPF0102 protein Tpet_0671 from Thermotoga petrophila (strain ATCC BAA-488 / DSM 13995 / JCM 10881 / RKU-1).